A 378-amino-acid polypeptide reads, in one-letter code: Erythronate-4-phosphate dehydrogenase (378 aa).

Ser45 and Thr66 together coordinate substrate. NAD(+)-binding residues include Asp146 and Thr175. Arg208 is a catalytic residue. Residue Asp232 coordinates NAD(+). The active site involves Glu237. His254 acts as the Proton donor in catalysis. An NAD(+)-binding site is contributed by Gly257. Tyr258 serves as a coordination point for substrate.

It belongs to the D-isomer specific 2-hydroxyacid dehydrogenase family. PdxB subfamily. Homodimer.

The protein localises to the cytoplasm. The catalysed reaction is 4-phospho-D-erythronate + NAD(+) = (R)-3-hydroxy-2-oxo-4-phosphooxybutanoate + NADH + H(+). It functions in the pathway cofactor biosynthesis; pyridoxine 5'-phosphate biosynthesis; pyridoxine 5'-phosphate from D-erythrose 4-phosphate: step 2/5. Its function is as follows. Catalyzes the oxidation of erythronate-4-phosphate to 3-hydroxy-2-oxo-4-phosphonooxybutanoate. The polypeptide is Erythronate-4-phosphate dehydrogenase (Cronobacter sakazakii (strain ATCC BAA-894) (Enterobacter sakazakii)).